The primary structure comprises 118 residues: Beta-defensin 126 (118 aa).

A signal peptide spans 1–20 (MKSLLFTLAVFMLLAQLVSG). The in vitro binds to LPS, mediates antimicrobial activity and inhibits LPS-mediated inflammation stretch occupies residues 21–63 (SWYVKKCLNDVGICKKKCKPEELHVKNGWAMCGKQRDCCVPAD). 3 disulfide bridges follow: Cys-27–Cys-58, Cys-34–Cys-52, and Cys-38–Cys-59.

It belongs to the beta-defensin family. As to quaternary structure, homodimer or homooligomer; disulfide-linked. O-glycosylated; glycans contain alpha(2,3)-linked sialic acids.

It localises to the secreted. In terms of biological role, highly glycosylated atypical beta-defensin involved in several aspects of sperm function. Facilitates sperm transport in the female reproductive tract and contributes to sperm protection against immunodetection; both functions are probably implicating the negative surface charge provided by its O-linked oligosaccharides in the sperm glycocalyx. Involved in binding of sperm to oviductal epithelial cells to form a sperm reservoir until ovulation. Release from the sperm surface during capacitation and ovaluation by an elevation of oviductal fluid pH is unmasking other surface components and allows sperm to penetrate the cumulus matrix and bind to the zona pellucida of the oocyte. In vitro has antimicrobial activity and may inhibit LPS-mediated inflammation. This Pongo pygmaeus (Bornean orangutan) protein is Beta-defensin 126 (DEFB126).